We begin with the raw amino-acid sequence, 252 residues long: Imidazole glycerol phosphate synthase subunit HisF (252 aa).

Residues Asp-11 and Asp-130 contribute to the active site.

The protein belongs to the HisA/HisF family. As to quaternary structure, heterodimer of HisH and HisF.

It localises to the cytoplasm. It carries out the reaction 5-[(5-phospho-1-deoxy-D-ribulos-1-ylimino)methylamino]-1-(5-phospho-beta-D-ribosyl)imidazole-4-carboxamide + L-glutamine = D-erythro-1-(imidazol-4-yl)glycerol 3-phosphate + 5-amino-1-(5-phospho-beta-D-ribosyl)imidazole-4-carboxamide + L-glutamate + H(+). Its pathway is amino-acid biosynthesis; L-histidine biosynthesis; L-histidine from 5-phospho-alpha-D-ribose 1-diphosphate: step 5/9. In terms of biological role, IGPS catalyzes the conversion of PRFAR and glutamine to IGP, AICAR and glutamate. The HisF subunit catalyzes the cyclization activity that produces IGP and AICAR from PRFAR using the ammonia provided by the HisH subunit. This is Imidazole glycerol phosphate synthase subunit HisF from Lactiplantibacillus plantarum (strain ATCC BAA-793 / NCIMB 8826 / WCFS1) (Lactobacillus plantarum).